Reading from the N-terminus, the 126-residue chain is Aspartate 1-decarboxylase (126 aa).

The active-site Schiff-base intermediate with substrate; via pyruvic acid is the Ser-25. Ser-25 carries the post-translational modification Pyruvic acid (Ser). Thr-57 provides a ligand contact to substrate. Tyr-58 (proton donor) is an active-site residue. Gly-73 to Ala-75 is a substrate binding site.

This sequence belongs to the PanD family. In terms of assembly, heterooctamer of four alpha and four beta subunits. Pyruvate is required as a cofactor. In terms of processing, is synthesized initially as an inactive proenzyme, which is activated by self-cleavage at a specific serine bond to produce a beta-subunit with a hydroxyl group at its C-terminus and an alpha-subunit with a pyruvoyl group at its N-terminus.

Its subcellular location is the cytoplasm. It catalyses the reaction L-aspartate + H(+) = beta-alanine + CO2. The protein operates within cofactor biosynthesis; (R)-pantothenate biosynthesis; beta-alanine from L-aspartate: step 1/1. In terms of biological role, catalyzes the pyruvoyl-dependent decarboxylation of aspartate to produce beta-alanine. The chain is Aspartate 1-decarboxylase from Escherichia coli O6:K15:H31 (strain 536 / UPEC).